Reading from the N-terminus, the 290-residue chain is 4-diphosphocytidyl-2-C-methyl-D-erythritol kinase (290 aa).

The active site involves Lys8. ATP is bound at residue 89-99; sequence PIGAGVGGGSS. Asp131 is a catalytic residue.

Belongs to the GHMP kinase family. IspE subfamily.

It carries out the reaction 4-CDP-2-C-methyl-D-erythritol + ATP = 4-CDP-2-C-methyl-D-erythritol 2-phosphate + ADP + H(+). It participates in isoprenoid biosynthesis; isopentenyl diphosphate biosynthesis via DXP pathway; isopentenyl diphosphate from 1-deoxy-D-xylulose 5-phosphate: step 3/6. Catalyzes the phosphorylation of the position 2 hydroxy group of 4-diphosphocytidyl-2C-methyl-D-erythritol. The chain is 4-diphosphocytidyl-2-C-methyl-D-erythritol kinase from Chlamydia felis (strain Fe/C-56) (Chlamydophila felis).